The primary structure comprises 606 residues: Lysosomal cobalamin transporter ABCD4 (606 aa).

The 294-residue stretch at 39-332 (NVLMFMTLLC…CFTQLIDLST (294 aa)) folds into the ABC transmembrane type-1 domain. 5 consecutive transmembrane segments (helical) span residues 43–63 (FMTL…VGLI), 76–96 (LDGF…NSTL), 190–210 (IFGY…PIVT), 279–299 (YLGS…GVYG), and 314–334 (AFVC…STTL). The region spanning 389–603 (LDRVSILAPS…GGGSWELTRI (215 aa)) is the ABC transporter domain. ATP is bound at residue 421 to 428 (GNTGTGKT).

The protein belongs to the ABC transporter superfamily. ABCD family. Peroxisomal fatty acyl CoA transporter (TC 3.A.1.203) subfamily. Homodimer or heterodimer. Interacts with LMBRD1; this interaction induces the translocation of ABCD4 from the ER to the lysosome membrane. Interacts with LMBRD1 and MMACHC; this interaction ensures the transport of cobalamin from the lysosome to the cytosol.

It localises to the endoplasmic reticulum membrane. It is found in the lysosome membrane. The enzyme catalyses an R-cob(III)alamin(out) + ATP + H2O = an R-cob(III)alamin(in) + ADP + phosphate + H(+). Functionally, lysosomal membrane protein that transports cobalamin (Vitamin B12) from the lysosomal lumen to the cytosol in an ATP-dependent manner. Targeted by LMBRD1 lysosomal chaperone from the endoplasmic reticulum to the lysosomal membrane. Then forms a complex with lysosomal chaperone LMBRD1 and cytosolic MMACHC to transport cobalamin across the lysosomal membrane. This chain is Lysosomal cobalamin transporter ABCD4, found in Mus musculus (Mouse).